The sequence spans 144 residues: Large ribosomal subunit protein uL15 (144 aa).

Residues Met-1–Gln-54 form a disordered region. Residues Gly-22–Ala-31 are compositionally biased toward gly residues.

It belongs to the universal ribosomal protein uL15 family. As to quaternary structure, part of the 50S ribosomal subunit.

Its function is as follows. Binds to the 23S rRNA. In Hydrogenovibrio crunogenus (strain DSM 25203 / XCL-2) (Thiomicrospira crunogena), this protein is Large ribosomal subunit protein uL15.